Consider the following 187-residue polypeptide: Large ribosomal subunit protein uL22 (187 aa).

It belongs to the universal ribosomal protein uL22 family.

In Theileria annulata, this protein is Large ribosomal subunit protein uL22 (RPL17).